A 644-amino-acid chain; its full sequence is Macrolide export ATP-binding/permease protein MacB (644 aa).

The Cytoplasmic portion of the chain corresponds to 1 to 268; sequence MNIIEIKQLN…SAIVAHKMRS (268 aa). Residues 4-242 form the ABC transporter domain; the sequence is IEIKQLNRYF…VKNPSVFKGR (239 aa). Residue 40–47 coordinates ATP; that stretch reads GQSGSGKS. A helical transmembrane segment spans residues 269–289; the sequence is LLTMLGIIIGITSVVSVVALG. At 290-523 the chain is on the periplasmic side; that stretch reads NGSQQKILEN…TGTMKLLISS (234 aa). A helical membrane pass occupies residues 524–544; sequence IAFISLIVGGIGVMNIMLVSV. The Cytoplasmic portion of the chain corresponds to 545-573; the sequence is TERTKEIGVRMAIGARQINILQQFLIEAV. A helical membrane pass occupies residues 574 to 594; it reads LICLIGGVAGILLSVLIGVLF. Residues 595-607 lie on the Periplasmic side of the membrane; that stretch reads NSFITDFSMDFST. The chain crosses the membrane as a helical span at residues 608 to 628; that stretch reads ASIVTAVLFSTLIGVLFGYMP. The Cytoplasmic segment spans residues 629-644; that stretch reads AKKAAELNPITALAQE.

The protein belongs to the ABC transporter superfamily. Macrolide exporter (TC 3.A.1.122) family. Homodimer. Part of the tripartite efflux system MacAB-TdeA, which is composed of an inner membrane transporter, MacB, a periplasmic membrane fusion protein, MacA, and an outer membrane component, TdeA. The complex forms a large protein conduit and can translocate molecules across both the inner and outer membranes. Interacts with MacA.

The protein localises to the cell inner membrane. Part of the tripartite efflux system MacAB-TdeA. MacB is a non-canonical ABC transporter that contains transmembrane domains (TMD), which form a pore in the inner membrane, and an ATP-binding domain (NBD), which is responsible for energy generation. Confers resistance against macrolides. This is Macrolide export ATP-binding/permease protein MacB from Aggregatibacter actinomycetemcomitans (Actinobacillus actinomycetemcomitans).